The sequence spans 716 residues: MFDYFRKEIEWAGRPLILETGKVARQADGAVMITYGDTVVLCTAVGAKSVKPGQDFFPLTVNYQEKAYAAGKIPGGFFKREGRPSEAEVLNARLIDRPIRPLFPENFRNEVQITATVLSYDNENDPALVSLIGCSAALTLSGIPFFGPVACARIGRIDGKLVVNPTHDEIKDSTLDLMVAGTAEGVLMVESEASELSEETMLEAVTLGHTSFQPVIDAIIALAEHAAKAPWDLPSLTKEEIALRKRVEKVGNKLMADAYKERQKQARYKKVAEAKDRINEILADEGLDVELAKPMLKELEAQVVRGSILKTGIRIDGRDLKTVRPILAEVGILPRAHGSSLFTRGETQALVVATLGTGQDEQIIDALEGEYRSNFMLHYNFPPYSVGECGRMGSPGRREIGHGKLAWRAIHPLLPSKEAFPYTMRVVSEITESNGSSSMATVCGSSLALMDAGVPLPRPVAGIAMGLIKEDRGYAVLSDILGDEDHLGDMDFKVAGTADGVTALQMDIKITSITPEIMKIALEQAREGRIHILGEMAKALTEGRGEVSGNAPKITTISVPKEKIRDVIGSGGKVIREIVEYSGAKVDIGDDGTVTIAASNDEQAQKAIARIEGIVAEPEIGRIYEGKVVKTADFGAFVNFLGPRDGLVHISELAEGRVAKTSDVVKQGDAVKVKVIGFDDRGKVKLSMRVVDQATGADITESVGAKPGRPPRRDAE.

The Mg(2+) site is built by D485 and D491. A KH domain is found at 552–611 (PKITTISVPKEKIRDVIGSGGKVIREIVEYSGAKVDIGDDGTVTIAASNDEQAQKAIARI). Residues 621-689 (GRIYEGKVVK…DRGKVKLSMR (69 aa)) form the S1 motif domain.

Belongs to the polyribonucleotide nucleotidyltransferase family. Mg(2+) is required as a cofactor.

The protein resides in the cytoplasm. It carries out the reaction RNA(n+1) + phosphate = RNA(n) + a ribonucleoside 5'-diphosphate. Functionally, involved in mRNA degradation. Catalyzes the phosphorolysis of single-stranded polyribonucleotides processively in the 3'- to 5'-direction. The protein is Polyribonucleotide nucleotidyltransferase of Gluconobacter oxydans (strain 621H) (Gluconobacter suboxydans).